The primary structure comprises 164 residues: Phosphopantetheine adenylyltransferase (164 aa).

Substrate is bound at residue Ser-10. Residues 10 to 11 (SF) and His-18 contribute to the ATP site. The substrate site is built by Lys-42, Leu-74, and Arg-88. ATP-binding positions include 89 to 91 (GLR), Glu-99, and 124 to 130 (YAFLSSS).

This sequence belongs to the bacterial CoaD family. As to quaternary structure, homohexamer. Mg(2+) serves as cofactor.

It is found in the cytoplasm. It catalyses the reaction (R)-4'-phosphopantetheine + ATP + H(+) = 3'-dephospho-CoA + diphosphate. It functions in the pathway cofactor biosynthesis; coenzyme A biosynthesis; CoA from (R)-pantothenate: step 4/5. Its function is as follows. Reversibly transfers an adenylyl group from ATP to 4'-phosphopantetheine, yielding dephospho-CoA (dPCoA) and pyrophosphate. In Geobacillus thermodenitrificans (strain NG80-2), this protein is Phosphopantetheine adenylyltransferase.